The primary structure comprises 250 residues: MRRPLVVGNWKMNGRSASVARLLNDILAGIGDCKAEVGVCVPFVYIPQASEILKGTKVMLGAQNVADHNSGAFTGEISAGMLREFGCELAIVGHSERRLLYGESNELVASRYEQAIQGHLKPILCVGETLEQREQGRTLAVIGAQIDTVFEFAGVQSLEHAVIAYEPVWAVGTGRSATTGQAQEVHYHIRSLIARWNPEVAQAVQIIYGGSVKPENSAELFAMPDIDGGLIGGASLDARAFLSICHSVSV.

Substrate is bound at residue 9–11 (NWK). Residue His94 is the Electrophile of the active site. Catalysis depends on Glu166, which acts as the Proton acceptor. Substrate is bound by residues Gly172, Ser211, and 232–233 (GG).

It belongs to the triosephosphate isomerase family. As to quaternary structure, homodimer.

The protein localises to the cytoplasm. The enzyme catalyses D-glyceraldehyde 3-phosphate = dihydroxyacetone phosphate. The protein operates within carbohydrate biosynthesis; gluconeogenesis. Its pathway is carbohydrate degradation; glycolysis; D-glyceraldehyde 3-phosphate from glycerone phosphate: step 1/1. Its function is as follows. Involved in the gluconeogenesis. Catalyzes stereospecifically the conversion of dihydroxyacetone phosphate (DHAP) to D-glyceraldehyde-3-phosphate (G3P). The sequence is that of Triosephosphate isomerase from Methylococcus capsulatus (strain ATCC 33009 / NCIMB 11132 / Bath).